The following is a 398-amino-acid chain: Acetate kinase (398 aa).

Asparagine 10 is a Mg(2+) binding site. Lysine 17 contributes to the ATP binding site. Residue arginine 91 coordinates substrate. Aspartate 148 acts as the Proton donor/acceptor in catalysis. ATP contacts are provided by residues histidine 208 to glycine 212, aspartate 283 to arginine 285, and glycine 331 to asparagine 335. A Mg(2+)-binding site is contributed by glutamate 385.

Belongs to the acetokinase family. Homodimer. Mg(2+) is required as a cofactor. Mn(2+) serves as cofactor.

It is found in the cytoplasm. It catalyses the reaction acetate + ATP = acetyl phosphate + ADP. The protein operates within metabolic intermediate biosynthesis; acetyl-CoA biosynthesis; acetyl-CoA from acetate: step 1/2. Catalyzes the formation of acetyl phosphate from acetate and ATP. Can also catalyze the reverse reaction. The sequence is that of Acetate kinase from Shewanella loihica (strain ATCC BAA-1088 / PV-4).